The chain runs to 165 residues: Xanthine-guanine phosphoribosyltransferase (165 aa).

5-phospho-alpha-D-ribose 1-diphosphate-binding positions include 41-42 (RG) and 98-106 (DDLTDTGKT). Position 99 (aspartate 99) interacts with Mg(2+). Residues aspartate 102 and isoleucine 145 each coordinate guanine. 2 residues coordinate xanthine: aspartate 102 and isoleucine 145. Residues 102-106 (DTGKT) and 144-145 (WI) contribute to the GMP site.

Belongs to the purine/pyrimidine phosphoribosyltransferase family. XGPT subfamily. In terms of assembly, homotetramer. It depends on Mg(2+) as a cofactor.

It is found in the cell inner membrane. It carries out the reaction GMP + diphosphate = guanine + 5-phospho-alpha-D-ribose 1-diphosphate. The enzyme catalyses XMP + diphosphate = xanthine + 5-phospho-alpha-D-ribose 1-diphosphate. The catalysed reaction is IMP + diphosphate = hypoxanthine + 5-phospho-alpha-D-ribose 1-diphosphate. It functions in the pathway purine metabolism; GMP biosynthesis via salvage pathway; GMP from guanine: step 1/1. Its pathway is purine metabolism; XMP biosynthesis via salvage pathway; XMP from xanthine: step 1/1. Its function is as follows. Purine salvage pathway enzyme that catalyzes the transfer of the ribosyl-5-phosphate group from 5-phospho-alpha-D-ribose 1-diphosphate (PRPP) to the N9 position of the 6-oxopurines guanine and xanthine to form the corresponding ribonucleotides GMP (guanosine 5'-monophosphate) and XMP (xanthosine 5'-monophosphate), with the release of PPi. To a lesser extent, also acts on hypoxanthine. The chain is Xanthine-guanine phosphoribosyltransferase from Sinorhizobium medicae (strain WSM419) (Ensifer medicae).